The following is a 577-amino-acid chain: Arginine--tRNA ligase (577 aa).

A 'HIGH' region motif is present at residues 123 to 133 (PNVAKEMHVGH).

Belongs to the class-I aminoacyl-tRNA synthetase family. In terms of assembly, monomer.

Its subcellular location is the cytoplasm. The enzyme catalyses tRNA(Arg) + L-arginine + ATP = L-arginyl-tRNA(Arg) + AMP + diphosphate. This is Arginine--tRNA ligase from Cronobacter sakazakii (strain ATCC BAA-894) (Enterobacter sakazakii).